Here is a 366-residue protein sequence, read N- to C-terminus: NADH-quinone oxidoreductase subunit H (366 aa).

A run of 8 helical transmembrane segments spans residues 27–47 (LLLI…LTFA), 99–119 (FLFL…WAVV), 134–154 (LLYI…AGWA), 168–188 (AAQV…VLMM), 206–226 (FLNW…ISGV), 268–288 (ILVA…PVDI), 294–314 (IPGM…FLWF), and 329–349 (LGWK…GMVM).

This sequence belongs to the complex I subunit 1 family. In terms of assembly, NDH-1 is composed of 14 different subunits. Subunits NuoA, H, J, K, L, M, N constitute the membrane sector of the complex.

It localises to the cell inner membrane. It carries out the reaction a quinone + NADH + 5 H(+)(in) = a quinol + NAD(+) + 4 H(+)(out). Functionally, NDH-1 shuttles electrons from NADH, via FMN and iron-sulfur (Fe-S) centers, to quinones in the respiratory chain. The immediate electron acceptor for the enzyme in this species is believed to be ubiquinone. Couples the redox reaction to proton translocation (for every two electrons transferred, four hydrogen ions are translocated across the cytoplasmic membrane), and thus conserves the redox energy in a proton gradient. This subunit may bind ubiquinone. In Nitrosomonas europaea (strain ATCC 19718 / CIP 103999 / KCTC 2705 / NBRC 14298), this protein is NADH-quinone oxidoreductase subunit H.